The sequence spans 307 residues: MPSSHGDLDRQIAQLRECKHLAEGEVRALCEQAKAILMEEWNVQPVRCPVTVCGDIHGQFYDLIELFRIGGEAPDTNYLFMGDYVDRGYYSVETVSLLVALKVRYRDRITILRGNHESRQITQVYGFYDECLRKYGNANVWKYFTDLFDYLPLTALIENQVFCLHGGLSPSLDTLDNIRALDRIQEVPHEGPMCDLLWSDPDDRCGWGISPRGAGYTFGQDIAQQFNHTNGLSLISRAHQLVMEGFNWCQDKNVVTVFSAPNYCYRCGNMAAILEIGENMDQNFLQFDPAPRQIEPDTTRKTPDYFL.

Mn(2+)-binding residues include Asp-55, His-57, Asp-83, and Asn-115. His-116 (proton donor) is an active-site residue. Mn(2+) contacts are provided by His-165 and His-239.

The protein belongs to the PPP phosphatase family. PP-2A subfamily. Mn(2+) serves as cofactor.

It localises to the cytoplasm. The enzyme catalyses O-phospho-L-seryl-[protein] + H2O = L-seryl-[protein] + phosphate. It catalyses the reaction O-phospho-L-threonyl-[protein] + H2O = L-threonyl-[protein] + phosphate. The protein is Serine/threonine-protein phosphatase PP2A-3 catalytic subunit (PP2A3) of Oryza sativa subsp. indica (Rice).